The chain runs to 140 residues: Methylglyoxal synthase (140 aa).

In terms of domain architecture, MGS-like spans Met-1–Pro-140. Residues His-12, Lys-16, Thr-38–Thr-41, and Ser-58–Gly-59 each bind substrate. Catalysis depends on Asp-64, which acts as the Proton donor/acceptor. His-91 contributes to the substrate binding site.

Belongs to the methylglyoxal synthase family.

The catalysed reaction is dihydroxyacetone phosphate = methylglyoxal + phosphate. Its function is as follows. Catalyzes the formation of methylglyoxal from dihydroxyacetone phosphate. The protein is Methylglyoxal synthase of Cupriavidus metallidurans (strain ATCC 43123 / DSM 2839 / NBRC 102507 / CH34) (Ralstonia metallidurans).